The sequence spans 416 residues: Splicing factor U2AF 50 kDa subunit (416 aa).

The segment covering 1–10 (MGYDDRERDR) has biased composition (basic and acidic residues). Residues 1–47 (MGYDDRERDRERRRHRSRSRDRHRERSRDRRHHRNSRRKPSLYWDVP) form a disordered region. Composition is skewed to basic residues over residues 11–21 (ERRRHRSRSRD) and 29–40 (DRRHHRNSRRKP). 3 RRM domains span residues 93–175 (RRLY…RPHD), 207–285 (HKIF…RASV), and 318–408 (EVLC…YFDP).

Belongs to the splicing factor SR family. In terms of assembly, forms a heterodimer with the U2AF small subunit.

The protein resides in the nucleus. Necessary for the splicing of pre-mRNA. Binds to the polypyrimidine tract of introns early during spliceosome assembly. In Drosophila melanogaster (Fruit fly), this protein is Splicing factor U2AF 50 kDa subunit (U2af50).